The sequence spans 136 residues: 5-hydroxyisourate hydrolase (136 aa).

The first 20 residues, 1–20 (MKRYILATVIASLVAAPAMA), serve as a signal peptide directing secretion. Positions 31, 69, and 133 each coordinate substrate.

It belongs to the transthyretin family. 5-hydroxyisourate hydrolase subfamily. As to quaternary structure, homotetramer.

It is found in the periplasm. It catalyses the reaction 5-hydroxyisourate + H2O = 5-hydroxy-2-oxo-4-ureido-2,5-dihydro-1H-imidazole-5-carboxylate + H(+). Functionally, catalyzes the hydrolysis of 5-hydroxyisourate (HIU) to 2-oxo-4-hydroxy-4-carboxy-5-ureidoimidazoline (OHCU). The sequence is that of 5-hydroxyisourate hydrolase (hiuH) from Salmonella typhimurium (strain LT2 / SGSC1412 / ATCC 700720).